Consider the following 253-residue polypeptide: Allene oxide cyclase 2, chloroplastic (253 aa).

The N-terminal 77 residues, 1-77 (MASSAVSLQS…SQNGNIENPR (77 aa)), are a transit peptide targeting the chloroplast.

Belongs to the allene oxide cyclase family. In terms of tissue distribution, highly expressed in fully developed leaves.

The protein localises to the plastid. It localises to the chloroplast. The enzyme catalyses (9Z,13S,15Z)-12,13-epoxyoctadeca-9,11,15-trienoate = (9S,13S,15Z)-12-oxophyto-10,15-dienoate. Functionally, involved in the production of 12-oxo-phytodienoic acid (OPDA), a precursor of jasmonic acid. This is Allene oxide cyclase 2, chloroplastic (AOC2) from Arabidopsis thaliana (Mouse-ear cress).